A 150-amino-acid polypeptide reads, in one-letter code: UPF0756 membrane protein PC1_1142 (150 aa).

A run of 4 helical transmembrane segments spans residues 1–21 (MAYL…GIIS), 51–71 (YGLS…IASG), 82–102 (FLHW…WLGG), and 127–147 (ALFR…SLLI).

It belongs to the UPF0756 family.

It localises to the cell membrane. This chain is UPF0756 membrane protein PC1_1142, found in Pectobacterium carotovorum subsp. carotovorum (strain PC1).